Consider the following 175-residue polypeptide: Adenine phosphoribosyltransferase (175 aa).

Belongs to the purine/pyrimidine phosphoribosyltransferase family. Homodimer.

It localises to the cytoplasm. The catalysed reaction is AMP + diphosphate = 5-phospho-alpha-D-ribose 1-diphosphate + adenine. It functions in the pathway purine metabolism; AMP biosynthesis via salvage pathway; AMP from adenine: step 1/1. Catalyzes a salvage reaction resulting in the formation of AMP, that is energically less costly than de novo synthesis. The polypeptide is Adenine phosphoribosyltransferase (Francisella tularensis subsp. tularensis (strain WY96-3418)).